The sequence spans 339 residues: Ferredoxin--NADP reductase (339 aa).

FAD is bound by residues Glu-35, Gln-43, Tyr-48, Val-88, Phe-122, Asp-287, and Ser-327.

The protein belongs to the ferredoxin--NADP reductase type 2 family. Homodimer. Requires FAD as cofactor.

The catalysed reaction is 2 reduced [2Fe-2S]-[ferredoxin] + NADP(+) + H(+) = 2 oxidized [2Fe-2S]-[ferredoxin] + NADPH. This chain is Ferredoxin--NADP reductase, found in Leuconostoc citreum (strain KM20).